Consider the following 379-residue polypeptide: Alcohol dehydrogenase class-3 (379 aa).

Residue serine 2 is modified to N-acetylserine. Zn(2+) contacts are provided by cysteine 48, histidine 70, cysteine 100, cysteine 103, cysteine 106, cysteine 114, and cysteine 177.

It belongs to the zinc-containing alcohol dehydrogenase family. Class-III subfamily. It depends on Zn(2+) as a cofactor.

The catalysed reaction is a primary alcohol + NAD(+) = an aldehyde + NADH + H(+). It catalyses the reaction a secondary alcohol + NAD(+) = a ketone + NADH + H(+). The enzyme catalyses S-(hydroxymethyl)glutathione + NADP(+) = S-formylglutathione + NADPH + H(+). It carries out the reaction S-(hydroxymethyl)glutathione + NAD(+) = S-formylglutathione + NADH + H(+). The catalysed reaction is octan-1-ol + NAD(+) = octanal + NADH + H(+). Class-III ADH is remarkably ineffective in oxidizing ethanol, but it readily catalyzes the oxidation of long-chain primary alcohols and the oxidation of S-(hydroxymethyl) glutathione. The protein is Alcohol dehydrogenase class-3 (Fdh) of Drosophila melanogaster (Fruit fly).